The sequence spans 159 residues: NADH-quinone oxidoreductase subunit B (159 aa).

The [4Fe-4S] cluster site is built by Cys36, Cys37, Cys102, and Cys132.

This sequence belongs to the complex I 20 kDa subunit family. In terms of assembly, NDH-1 is composed of 14 different subunits. Subunits NuoB, C, D, E, F, and G constitute the peripheral sector of the complex. It depends on [4Fe-4S] cluster as a cofactor.

The protein resides in the cell inner membrane. The enzyme catalyses a quinone + NADH + 5 H(+)(in) = a quinol + NAD(+) + 4 H(+)(out). NDH-1 shuttles electrons from NADH, via FMN and iron-sulfur (Fe-S) centers, to quinones in the respiratory chain. Couples the redox reaction to proton translocation (for every two electrons transferred, four hydrogen ions are translocated across the cytoplasmic membrane), and thus conserves the redox energy in a proton gradient. The sequence is that of NADH-quinone oxidoreductase subunit B from Albidiferax ferrireducens (strain ATCC BAA-621 / DSM 15236 / T118) (Rhodoferax ferrireducens).